The following is a 343-amino-acid chain: Ribosomal RNA small subunit methyltransferase C (343 aa).

It belongs to the methyltransferase superfamily. RsmC family. Monomer.

Its subcellular location is the cytoplasm. The enzyme catalyses guanosine(1207) in 16S rRNA + S-adenosyl-L-methionine = N(2)-methylguanosine(1207) in 16S rRNA + S-adenosyl-L-homocysteine + H(+). Functionally, specifically methylates the guanine in position 1207 of 16S rRNA in the 30S particle. This Shigella flexneri protein is Ribosomal RNA small subunit methyltransferase C.